A 614-amino-acid chain; its full sequence is Phosphomethylpyrimidine synthase (614 aa).

Substrate is bound by residues Asn226, Met255, Tyr284, His320, 340–342, 381–384, and Glu420; these read SRG and DGLR. Residue His424 coordinates Zn(2+). Tyr447 lines the substrate pocket. His488 serves as a coordination point for Zn(2+). [4Fe-4S] cluster is bound by residues Cys568, Cys571, and Cys576.

This sequence belongs to the ThiC family. Homodimer. It depends on [4Fe-4S] cluster as a cofactor.

The enzyme catalyses 5-amino-1-(5-phospho-beta-D-ribosyl)imidazole + S-adenosyl-L-methionine = 4-amino-2-methyl-5-(phosphooxymethyl)pyrimidine + CO + 5'-deoxyadenosine + formate + L-methionine + 3 H(+). Its pathway is cofactor biosynthesis; thiamine diphosphate biosynthesis. In terms of biological role, catalyzes the synthesis of the hydroxymethylpyrimidine phosphate (HMP-P) moiety of thiamine from aminoimidazole ribotide (AIR) in a radical S-adenosyl-L-methionine (SAM)-dependent reaction. The polypeptide is Phosphomethylpyrimidine synthase (Acidovorax ebreus (strain TPSY) (Diaphorobacter sp. (strain TPSY))).